The chain runs to 132 residues: Small ribosomal subunit protein uS12 (132 aa).

Asp-89 bears the 3-methylthioaspartic acid mark.

Belongs to the universal ribosomal protein uS12 family. As to quaternary structure, part of the 30S ribosomal subunit. Contacts proteins S8 and S17. May interact with IF1 in the 30S initiation complex.

Functionally, with S4 and S5 plays an important role in translational accuracy. Interacts with and stabilizes bases of the 16S rRNA that are involved in tRNA selection in the A site and with the mRNA backbone. Located at the interface of the 30S and 50S subunits, it traverses the body of the 30S subunit contacting proteins on the other side and probably holding the rRNA structure together. The combined cluster of proteins S8, S12 and S17 appears to hold together the shoulder and platform of the 30S subunit. The chain is Small ribosomal subunit protein uS12 from Campylobacter curvus (strain 525.92).